We begin with the raw amino-acid sequence, 83 residues long: Small ribosomal subunit protein bS16 (83 aa).

The protein belongs to the bacterial ribosomal protein bS16 family.

In Pseudomonas putida (strain ATCC 700007 / DSM 6899 / JCM 31910 / BCRC 17059 / LMG 24140 / F1), this protein is Small ribosomal subunit protein bS16.